The chain runs to 428 residues: Probable anion transporter 6 (428 aa).

Residues 1–22 (MKFPKRYAIVLLTFMCTNVCYI) form the signal peptide. The next 11 helical transmembrane spans lie at 47 to 67 (MILSMFYYGYVLSQIPGGWAA), 74 to 94 (LVLLLSFVLWSSICAVVPLDP), 98 to 118 (ILLVLSRLLVGVAQGLIFPSI), 137 to 157 (LTTSGMYLGAACGMLLLPSLV), 164 to 184 (SVFSVEAMLGVAWLLIWFKFA), 221 to 241 (ILFSLPIWAIVVNNFTFHYAL), 269 to 289 (LPYLNMFLFSNIGGVLADHLI), 301 to 321 (KLLNTVGFVVSAIALMALPLF), 327 to 347 (AIFCSSVSLGFLALGRAGFAV), 356 to 376 (FAGIVMGISNTAGTLAGIVGV), and 401 to 421 (TVFFVPGYLCIFSSFIFLIFS).

It belongs to the major facilitator superfamily. Sodium/anion cotransporter (TC 2.A.1.14) family.

It is found in the cell membrane. Its function is as follows. Probable anion transporter. This Oryza sativa subsp. japonica (Rice) protein is Probable anion transporter 6 (PHT4;6).